Reading from the N-terminus, the 562-residue chain is Actin-related protein 8 (562 aa).

248–251 serves as a coordination point for ATP; that stretch reads DVGD.

It belongs to the actin family. ARP8 subfamily. As to quaternary structure, component of the chromatin remodeling Ino80 complex. Exists as monomers and dimers, but the dimer is most probably the biologically relevant form required for stable interactions with histones that exploits the twofold symmetry of the nucleosome core.

It localises to the nucleus. Its function is as follows. Plays an important role in the functional organization of mitotic chromosomes. Exhibits low basal ATPase activity, and unable to polymerize. In terms of biological role, proposed core component of the chromatin remodeling INO80 complex which is involved in transcriptional regulation, DNA replication and probably DNA repair. Strongly prefer nucleosomes and H3-H4 tetramers over H2A-H2B dimers, suggesting it may act as a nucleosome recognition module within the complex. The polypeptide is Actin-related protein 8 (Aedes aegypti (Yellowfever mosquito)).